Here is a 569-residue protein sequence, read N- to C-terminus: Laccase-6 (569 aa).

Residues 1-29 form the signal peptide; it reads MTSSAVPSLFRLSFLLFTLQVMNIGRIGA. 2 Plastocyanin-like domains span residues 37–153 and 163–315; these read KVQT…PKAS and NEHT…YIGA. Asparagine 83 is a glycosylation site (N-linked (GlcNAc...) asparagine). The Cu cation site is built by histidine 87, histidine 89, histidine 132, and histidine 134. N-linked (GlcNAc...) asparagine glycosylation is found at asparagine 208, asparagine 303, asparagine 319, asparagine 392, asparagine 438, and asparagine 444. The 137-residue stretch at 417 to 553 folds into the Plastocyanin-like 3 domain; sequence DFPTTPEKAY…STMFIVKNGK (137 aa). Cu cation contacts are provided by histidine 472, histidine 475, histidine 477, histidine 532, cysteine 533, histidine 534, histidine 538, and methionine 543.

It belongs to the multicopper oxidase family. Cu cation is required as a cofactor. Predominantly expressed in the inflorescence stem, but not in siliques.

It is found in the secreted. Its subcellular location is the extracellular space. It localises to the apoplast. It carries out the reaction 4 hydroquinone + O2 = 4 benzosemiquinone + 2 H2O. In terms of biological role, lignin degradation and detoxification of lignin-derived products. In Arabidopsis thaliana (Mouse-ear cress), this protein is Laccase-6 (LAC6).